A 208-amino-acid chain; its full sequence is Thymidylate kinase (208 aa).

Residue 9 to 16 coordinates ATP; it reads GGEGCGKS.

It belongs to the thymidylate kinase family.

The enzyme catalyses dTMP + ATP = dTDP + ADP. Functionally, phosphorylation of dTMP to form dTDP in both de novo and salvage pathways of dTTP synthesis. This Dehalococcoides mccartyi (strain CBDB1) protein is Thymidylate kinase.